Consider the following 229-residue polypeptide: LexA repressor (229 aa).

The H-T-H motif DNA-binding region spans 28–48 (IREIGEALDIRSTNGVNDHLK). Catalysis depends on for autocatalytic cleavage activity residues Ser147 and Lys184.

It belongs to the peptidase S24 family. Homodimer.

It catalyses the reaction Hydrolysis of Ala-|-Gly bond in repressor LexA.. In terms of biological role, represses a number of genes involved in the response to DNA damage (SOS response), including recA and lexA. In the presence of single-stranded DNA, RecA interacts with LexA causing an autocatalytic cleavage which disrupts the DNA-binding part of LexA, leading to derepression of the SOS regulon and eventually DNA repair. The chain is LexA repressor from Anaeromyxobacter dehalogenans (strain 2CP-C).